A 323-amino-acid polypeptide reads, in one-letter code: CIMIP2 protein CG18335 (323 aa).

The protein belongs to the CIMIP2 family.

It is found in the cytoplasm. Its subcellular location is the cytoskeleton. The protein resides in the cilium axoneme. In terms of biological role, probable microtubule inner protein (MIP) part of the dynein-decorated doublet microtubules (DMTs) in cilium axoneme. This Drosophila melanogaster (Fruit fly) protein is CIMIP2 protein CG18335.